Consider the following 90-residue polypeptide: uncharacterized protein (90 aa).

The interval Met-1 to Arg-26 is disordered. Residues Asn-33–Asp-66 are a coiled coil.

This is an uncharacterized protein from Dictyostelium discoideum (Social amoeba).